The sequence spans 264 residues: Triosephosphate isomerase (264 aa).

12 to 14 is a binding site for substrate; the sequence is NWK. The active-site Electrophile is the His104. The active-site Proton acceptor is Glu176. Substrate is bound by residues Gly182, Ser222, and 243–244; that span reads GG.

Belongs to the triosephosphate isomerase family. In terms of assembly, homodimer.

It localises to the cytoplasm. It carries out the reaction D-glyceraldehyde 3-phosphate = dihydroxyacetone phosphate. It functions in the pathway carbohydrate biosynthesis; gluconeogenesis. Its pathway is carbohydrate degradation; glycolysis; D-glyceraldehyde 3-phosphate from glycerone phosphate: step 1/1. Functionally, involved in the gluconeogenesis. Catalyzes stereospecifically the conversion of dihydroxyacetone phosphate (DHAP) to D-glyceraldehyde-3-phosphate (G3P). This is Triosephosphate isomerase from Bifidobacterium adolescentis (strain ATCC 15703 / DSM 20083 / NCTC 11814 / E194a).